The sequence spans 398 residues: Probable aminomethyltransferase (398 aa).

This sequence belongs to the GcvT family. As to quaternary structure, the glycine cleavage system is composed of four proteins: P, T, L and H.

It carries out the reaction N(6)-[(R)-S(8)-aminomethyldihydrolipoyl]-L-lysyl-[protein] + (6S)-5,6,7,8-tetrahydrofolate = N(6)-[(R)-dihydrolipoyl]-L-lysyl-[protein] + (6R)-5,10-methylene-5,6,7,8-tetrahydrofolate + NH4(+). In terms of biological role, the glycine cleavage system catalyzes the degradation of glycine. This chain is Probable aminomethyltransferase, found in Pyrococcus horikoshii (strain ATCC 700860 / DSM 12428 / JCM 9974 / NBRC 100139 / OT-3).